We begin with the raw amino-acid sequence, 215 residues long: NADH-quinone oxidoreductase subunit C (215 aa).

It belongs to the complex I 30 kDa subunit family. NDH-1 is composed of 14 different subunits. Subunits NuoB, C, D, E, F, and G constitute the peripheral sector of the complex.

Its subcellular location is the cell inner membrane. It carries out the reaction a quinone + NADH + 5 H(+)(in) = a quinol + NAD(+) + 4 H(+)(out). Its function is as follows. NDH-1 shuttles electrons from NADH, via FMN and iron-sulfur (Fe-S) centers, to quinones in the respiratory chain. The immediate electron acceptor for the enzyme in this species is believed to be ubiquinone. Couples the redox reaction to proton translocation (for every two electrons transferred, four hydrogen ions are translocated across the cytoplasmic membrane), and thus conserves the redox energy in a proton gradient. The polypeptide is NADH-quinone oxidoreductase subunit C (Dinoroseobacter shibae (strain DSM 16493 / NCIMB 14021 / DFL 12)).